The primary structure comprises 124 residues: Small ribosomal subunit protein uS12 (124 aa).

The disordered stretch occupies residues 1 to 32 (MPTIQQLVRKGRKDKATKTKTPALKGSPQRRG). D89 carries the post-translational modification 3-methylthioaspartic acid. Residues 105–124 (QGVRGRQQARSRYGAKKEKK) are disordered. Basic residues predominate over residues 111 to 124 (QQARSRYGAKKEKK).

It belongs to the universal ribosomal protein uS12 family. As to quaternary structure, part of the 30S ribosomal subunit. Contacts proteins S8 and S17. May interact with IF1 in the 30S initiation complex.

Its function is as follows. With S4 and S5 plays an important role in translational accuracy. Functionally, interacts with and stabilizes bases of the 16S rRNA that are involved in tRNA selection in the A site and with the mRNA backbone. Located at the interface of the 30S and 50S subunits, it traverses the body of the 30S subunit contacting proteins on the other side and probably holding the rRNA structure together. The combined cluster of proteins S8, S12 and S17 appears to hold together the shoulder and platform of the 30S subunit. This chain is Small ribosomal subunit protein uS12, found in Beutenbergia cavernae (strain ATCC BAA-8 / DSM 12333 / CCUG 43141 / JCM 11478 / NBRC 16432 / NCIMB 13614 / HKI 0122).